The sequence spans 294 residues: Elongation factor Ts (294 aa).

The segment at 80–83 (TDFV) is involved in Mg(2+) ion dislocation from EF-Tu.

The protein belongs to the EF-Ts family.

It is found in the cytoplasm. In terms of biological role, associates with the EF-Tu.GDP complex and induces the exchange of GDP to GTP. It remains bound to the aminoacyl-tRNA.EF-Tu.GTP complex up to the GTP hydrolysis stage on the ribosome. The protein is Elongation factor Ts of Listeria innocua serovar 6a (strain ATCC BAA-680 / CLIP 11262).